A 284-amino-acid polypeptide reads, in one-letter code: Bifunctional protein FolD (284 aa).

NADP(+) is bound by residues 166–168 (GSS) and Ile232.

Belongs to the tetrahydrofolate dehydrogenase/cyclohydrolase family. In terms of assembly, homodimer.

The catalysed reaction is (6R)-5,10-methylene-5,6,7,8-tetrahydrofolate + NADP(+) = (6R)-5,10-methenyltetrahydrofolate + NADPH. The enzyme catalyses (6R)-5,10-methenyltetrahydrofolate + H2O = (6R)-10-formyltetrahydrofolate + H(+). Its pathway is one-carbon metabolism; tetrahydrofolate interconversion. Catalyzes the oxidation of 5,10-methylenetetrahydrofolate to 5,10-methenyltetrahydrofolate and then the hydrolysis of 5,10-methenyltetrahydrofolate to 10-formyltetrahydrofolate. The protein is Bifunctional protein FolD of Buchnera aphidicola subsp. Cinara cedri (strain Cc).